The primary structure comprises 107 residues: CRISPR-associated endoribonuclease Cas2 (107 aa).

D6 lines the Mg(2+) pocket.

Belongs to the CRISPR-associated endoribonuclease Cas2 protein family. In terms of assembly, homodimer, forms a heterotetramer with a Cas1 homodimer. Mg(2+) serves as cofactor.

Its function is as follows. CRISPR (clustered regularly interspaced short palindromic repeat), is an adaptive immune system that provides protection against mobile genetic elements (viruses, transposable elements and conjugative plasmids). CRISPR clusters contain sequences complementary to antecedent mobile elements and target invading nucleic acids. CRISPR clusters are transcribed and processed into CRISPR RNA (crRNA). Functions as a ssRNA-specific endoribonuclease. Involved in the integration of spacer DNA into the CRISPR cassette. In Streptococcus mutans serotype c (strain NN2025), this protein is CRISPR-associated endoribonuclease Cas2.